A 348-amino-acid chain; its full sequence is L-seryl-tRNA(Sec) kinase (348 aa).

Residue 25-32 (GLPAAGKS) coordinates ATP.

Belongs to the L-seryl-tRNA(Sec) kinase family. Mg(2+) serves as cofactor.

The enzyme catalyses L-seryl-tRNA(Sec) + ATP = O-phospho-L-seryl-tRNA(Sec) + ADP. It functions in the pathway aminoacyl-tRNA biosynthesis; selenocysteinyl-tRNA(Sec) biosynthesis; selenocysteinyl-tRNA(Sec) from L-seryl-tRNA(Sec) (archaeal/eukaryal route): step 1/2. Functionally, specifically phosphorylates seryl-tRNA(Sec) to O-phosphoseryl-tRNA(Sec), an activated intermediate for selenocysteine biosynthesis. In Homo sapiens (Human), this protein is L-seryl-tRNA(Sec) kinase (PSTK).